Reading from the N-terminus, the 48-residue chain is Cuticle protein 6 isoform b (48 aa).

This is Cuticle protein 6 isoform b from Limulus polyphemus (Atlantic horseshoe crab).